The sequence spans 292 residues: Elongation factor Ts (292 aa).

Residues 82-85 form an involved in Mg(2+) ion dislocation from EF-Tu region; the sequence is TDFV.

Belongs to the EF-Ts family.

It is found in the cytoplasm. Functionally, associates with the EF-Tu.GDP complex and induces the exchange of GDP to GTP. It remains bound to the aminoacyl-tRNA.EF-Tu.GTP complex up to the GTP hydrolysis stage on the ribosome. The chain is Elongation factor Ts from Bordetella avium (strain 197N).